A 638-amino-acid polypeptide reads, in one-letter code: Signal recognition particle receptor subunit alpha (638 aa).

Disordered regions lie at residues 129–205, 218–245, and 262–315; these read KIRA…VELS, IQKH…KKAP, and SAPT…ATKG. Basic and acidic residues-rich tracts occupy residues 137-146 and 153-165; these read KKFEDSEKAK and IETR…EKAK. Serine 177 carries the phosphoserine modification. Basic and acidic residues predominate over residues 218–239; sequence IQKHGRGLEKSSKSTKSDAPKE. Threonine 284 is modified (phosphothreonine). Serine 296, serine 297, and serine 298 each carry phosphoserine. A compositionally biased stretch (polar residues) spans 304–314; it reads AQNASKPSATK. Positions 419–636 are NG domain; it reads YVVTFCGVNG…NAKAVVAALM (218 aa). 425-432 serves as a coordination point for GTP; sequence GVNGVGKS. Serine 473 is subject to Phosphoserine. 520 to 524 is a binding site for GTP; the sequence is DTAGR. Threonine 578 carries the post-translational modification Phosphothreonine. 588-591 serves as a coordination point for GTP; it reads TKFD.

This sequence belongs to the GTP-binding SRP family. In terms of assembly, heterodimer with SRPRB. Interacts with the signal recognition particle (SRP) complex subunit SRP54.

It localises to the endoplasmic reticulum membrane. Component of the SRP (signal recognition particle) receptor. Ensures, in conjunction with the signal recognition particle, the correct targeting of the nascent secretory proteins to the endoplasmic reticulum membrane system. Forms a guanosine 5'-triphosphate (GTP)-dependent complex with the SRP subunit SRP54. SRP receptor compaction and GTPase rearrangement drive SRP-mediated cotranslational protein translocation into the ER. The chain is Signal recognition particle receptor subunit alpha from Canis lupus familiaris (Dog).